The primary structure comprises 65 residues: UPF0434 protein BRADO0313 (65 aa).

It belongs to the UPF0434 family.

The sequence is that of UPF0434 protein BRADO0313 from Bradyrhizobium sp. (strain ORS 278).